Here is a 323-residue protein sequence, read N- to C-terminus: Lipid A biosynthesis acyltransferase 1 (323 aa).

Residues 23–43 traverse the membrane as a helical segment; the sequence is YWGAWLGVAAMAGIALTPPKF. Positions 139–144 match the HXXXXD motif motif; sequence HGWAVD.

It belongs to the LpxL/LpxM/LpxP family. LpxM subfamily.

It is found in the cell inner membrane. It carries out the reaction an alpha-Kdo-(2-&gt;4)-alpha-Kdo-(2-&gt;6)-(acyl)-lipid IVA + a fatty acyl-[ACP] = an alpha-Kdo-(2-&gt;4)-alpha-Kdo-(2-&gt;6)-lipid A + holo-[ACP]. The protein operates within glycolipid biosynthesis; KDO(2)-lipid A biosynthesis; KDO(2)-lipid A from CMP-3-deoxy-D-manno-octulosonate and lipid IV(A): step 4/4. It functions in the pathway bacterial outer membrane biogenesis; lipopolysaccharide biosynthesis. In terms of biological role, catalyzes the transfer of an acyl chain from an acyl-[acyl-carrier-protein] (ACP) to a Kdo(2)-(acyl)-lipid IV(A) to form a Kdo(2)-lipid A. This Shigella flexneri protein is Lipid A biosynthesis acyltransferase 1.